The chain runs to 100 residues: Aspartyl/glutamyl-tRNA(Asn/Gln) amidotransferase subunit C (100 aa).

This sequence belongs to the GatC family. Heterotrimer of A, B and C subunits.

It catalyses the reaction L-glutamyl-tRNA(Gln) + L-glutamine + ATP + H2O = L-glutaminyl-tRNA(Gln) + L-glutamate + ADP + phosphate + H(+). The catalysed reaction is L-aspartyl-tRNA(Asn) + L-glutamine + ATP + H2O = L-asparaginyl-tRNA(Asn) + L-glutamate + ADP + phosphate + 2 H(+). Its function is as follows. Allows the formation of correctly charged Asn-tRNA(Asn) or Gln-tRNA(Gln) through the transamidation of misacylated Asp-tRNA(Asn) or Glu-tRNA(Gln) in organisms which lack either or both of asparaginyl-tRNA or glutaminyl-tRNA synthetases. The reaction takes place in the presence of glutamine and ATP through an activated phospho-Asp-tRNA(Asn) or phospho-Glu-tRNA(Gln). In Herminiimonas arsenicoxydans, this protein is Aspartyl/glutamyl-tRNA(Asn/Gln) amidotransferase subunit C.